The sequence spans 240 residues: Glutathione S-transferase theta-1 (240 aa).

One can recognise a GST N-terminal domain in the interval 2 to 82; it reads GLELYLDLLS…YLTRKYKVPD (81 aa). Glutathione contacts are provided by residues histidine 40, 53 to 54, and 66 to 67; these read KV and ES. In terms of domain architecture, GST C-terminal spans 88–220; sequence DLQARARVDE…HEVILKAKDF (133 aa).

The protein belongs to the GST superfamily. Theta family. As to quaternary structure, homodimer. Found in erythrocyte. Expressed at low levels in liver. In lung, expressed at low levels in club cells and ciliated cells at the alveolar/bronchiolar junction. Absent from epithelial cells of larger bronchioles.

It localises to the cytoplasm. It catalyses the reaction RX + glutathione = an S-substituted glutathione + a halide anion + H(+). Its function is as follows. Conjugation of reduced glutathione to a wide number of exogenous and endogenous hydrophobic electrophiles. Acts on 1,2-epoxy-3-(4-nitrophenoxy)propane, phenethylisothiocyanate 4-nitrobenzyl chloride and 4-nitrophenethyl bromide. Displays glutathione peroxidase activity with cumene hydroperoxide. The sequence is that of Glutathione S-transferase theta-1 (GSTT1) from Homo sapiens (Human).